We begin with the raw amino-acid sequence, 470 residues long: Argininosuccinate lyase (470 aa).

It belongs to the lyase 1 family. Argininosuccinate lyase subfamily.

It is found in the cytoplasm. It carries out the reaction 2-(N(omega)-L-arginino)succinate = fumarate + L-arginine. It participates in amino-acid biosynthesis; L-arginine biosynthesis; L-arginine from L-ornithine and carbamoyl phosphate: step 3/3. The sequence is that of Argininosuccinate lyase from Mycobacterium leprae (strain Br4923).